Reading from the N-terminus, the 292-residue chain is Sulfofructosephosphate aldolase (292 aa).

Lysine 193 (schiff-base intermediate with substrate) is an active-site residue.

It belongs to the aldolase LacD family. In terms of assembly, homotetramer.

It catalyses the reaction 6-deoxy-6-sulfo-D-fructose 1-phosphate = (2S)-3-sulfolactaldehyde + dihydroxyacetone phosphate. Its function is as follows. Cleaves 6-deoxy-6-sulfo-D-fructose 1-phosphate (SFP) to form dihydroxyacetone phosphate (DHAP) and 3-sulfolactaldehyde (SLA). The sequence is that of Sulfofructosephosphate aldolase (yihT) from Escherichia coli (strain K12).